The primary structure comprises 159 residues: Phosphopantetheine adenylyltransferase (159 aa).

Thr-9 contacts substrate. ATP-binding positions include 9-10 (TF) and His-17. Residues Lys-41, Leu-73, and Arg-87 each contribute to the substrate site. ATP-binding positions include 88 to 90 (GLR), Glu-98, and 123 to 129 (YMFISAT).

The protein belongs to the bacterial CoaD family. In terms of assembly, homohexamer. The cofactor is Mg(2+).

It is found in the cytoplasm. It catalyses the reaction (R)-4'-phosphopantetheine + ATP + H(+) = 3'-dephospho-CoA + diphosphate. Its pathway is cofactor biosynthesis; coenzyme A biosynthesis; CoA from (R)-pantothenate: step 4/5. Reversibly transfers an adenylyl group from ATP to 4'-phosphopantetheine, yielding dephospho-CoA (dPCoA) and pyrophosphate. This Nitrosomonas europaea (strain ATCC 19718 / CIP 103999 / KCTC 2705 / NBRC 14298) protein is Phosphopantetheine adenylyltransferase.